Here is a 470-residue protein sequence, read N- to C-terminus: Argininosuccinate lyase (470 aa).

Belongs to the lyase 1 family. Argininosuccinate lyase subfamily.

The protein resides in the cytoplasm. It catalyses the reaction 2-(N(omega)-L-arginino)succinate = fumarate + L-arginine. It participates in amino-acid biosynthesis; L-arginine biosynthesis; L-arginine from L-ornithine and carbamoyl phosphate: step 3/3. The polypeptide is Argininosuccinate lyase (Mycobacterium marinum (strain ATCC BAA-535 / M)).